Here is a 798-residue protein sequence, read N- to C-terminus: Protocadherin beta-14 (798 aa).

Positions 1 to 26 (MEIRGALDLRKRQVLIFLVLLGLSRA) are cleaved as a signal peptide. Topologically, residues 27–686 (GTESAHYSVA…APAQAQADSL (660 aa)) are extracellular. 5 consecutive Cadherin domains span residues 35-133 (VAEE…SPTF), 138-242 (ILIK…APEF), 247-347 (YEVQ…PPEV), 352-451 (ITKR…APTF), and 456-561 (YTLF…SPFV). A disulfide bond links Cys-96 and Cys-102. N-linked (GlcNAc...) asparagine glycosylation is present at Asn-169. N-linked (GlcNAc...) asparagine glycans are attached at residues Asn-359, Asn-418, Asn-436, Asn-487, and Asn-567. The region spanning 568–671 (GSAPCTELVP…LVDGFSQPYL (104 aa)) is the Cadherin 6 domain. Residues 687 to 711 (TVYLVVALASVSSLFLFSVLLFVAV) form a helical membrane-spanning segment. Over 712-798 (RLCRRSRAAS…FRNSFGLNIQ (87 aa)) the chain is Cytoplasmic.

It is found in the cell membrane. Potential calcium-dependent cell-adhesion protein. May be involved in the establishment and maintenance of specific neuronal connections in the brain. This Homo sapiens (Human) protein is Protocadherin beta-14 (PCDHB14).